A 282-amino-acid polypeptide reads, in one-letter code: MYFKRYLQLAKPGIIFGNLITLTGGFLLATHREIGFEYLPLFVYVMIGVALMIAAGCVFNNIYDKDIDSSMTRTQNRPLVTGDISVIQATIYGTILLILSCLVLYYLVILLTLWIIIIGFIVYVGIYTVSKRLTIHATVLGGISGAIPPVAGYTAVVNILDYNALALFLILFFWQIPHSYAIAMLYIDDYKKVKLPMLPIVKGIAYTKKIMLFYLALFVVSCALPAVLGSADLFSFIVCMLVALFWMYKSIQSYRTDTDRVFAKTVFKFSIIVITVICLTMG.

9 consecutive transmembrane segments (helical) span residues 9–29 (LAKP…FLLA), 39–59 (LPLF…GCVF), 79–99 (LVTG…LLIL), 102–122 (LVLY…GFIV), 139–159 (VLGG…VVNI), 165–185 (LALF…IAML), 210–230 (IMLF…VLGS), 231–251 (ADLF…YKSI), and 261–281 (VFAK…CLTM).

This sequence belongs to the UbiA prenyltransferase family. Protoheme IX farnesyltransferase subfamily.

Its subcellular location is the cell inner membrane. The enzyme catalyses heme b + (2E,6E)-farnesyl diphosphate + H2O = Fe(II)-heme o + diphosphate. The protein operates within porphyrin-containing compound metabolism; heme O biosynthesis; heme O from protoheme: step 1/1. Functionally, converts heme B (protoheme IX) to heme O by substitution of the vinyl group on carbon 2 of heme B porphyrin ring with a hydroxyethyl farnesyl side group. This is Protoheme IX farnesyltransferase from Francisella tularensis subsp. tularensis (strain FSC 198).